Here is a 428-residue protein sequence, read N- to C-terminus: Cytokine-dependent hematopoietic cell linker (428 aa).

The tract at residues 1 to 22 (MNRQGNRKTTKEGSNDLKFQNF) is disordered. Residues tyrosine 69 and tyrosine 96 each carry the phosphotyrosine; by LYN modification. Disordered regions lie at residues 135–198 (DKPI…EVQR) and 244–271 (SSSFTTSNHSVQNRDHRGGMQPCSPQRC). The tract at residues 159 to 164 (PLPPPR) is mediates interaction with PLCG1; essential for BCR signaling; involved in restoration of BCR-induced calcium response and ERK2 and JNK2 activation in BLNK-deficient cells expressing LAT. A mediates interaction with LAT, GRB2, and FGR; involved in translocation to the glycolipid-enriched microdomain and restoration of BCR-induced calcium response in BLNK-deficient DT40 cells expressing LAT region spans residues 178–180 (PEP). Over residues 244–253 (SSSFTTSNHS) the composition is skewed to low complexity. Positions 309–419 (WYIGEYSRQA…RKQCHLTQPL (111 aa)) constitute an SH2 domain.

As to quaternary structure, when phosphorylated, interacts with PLCG1, PLCG2, GRB2, VAV and LAT. Interacts with LBR and AGO2. Interacts with FGR. Part of a complex consisting of CLNK, SKAP1 and FYB1. Interacts (via SH2 domain) with FYB1; this interaction allows SKAP1 and FYB1 to promote tyrosine phosphorylation of CLNK by LYN. Interacts (via SH2 domain) with MAP4K1. Post-translationally, tyrosine-phosphorylated upon BCR cross-linking. Tyrosine phosphorylation at both Tyr-69 and Tyr-96 are required for BCR-induced calcium response and are essential to restore PLCG2-mediated signaling in BLNK-deficient DT40 cells, but this phosphorylation is dispensable in cells expressing LAT. Interacts with the SH2 domain of PLCG1 via phosphorylated Tyr-96. Tyrosine phosphorylation is increased when complexed with SKAP1 and FYB1.

It is found in the cytoplasm. Functionally, an adapter protein which plays a role in the regulation of immunoreceptor signaling, including PLC-gamma-mediated B-cell antigen receptor (BCR) signaling and FC-epsilon R1-mediated mast cell degranulation. Together with FGR, it acts as a negative regulator of natural killer cell-activating receptors and inhibits interferon-gamma production. Acts as a positive regulator of both T-cell receptor and natural killer T (NKT) cell receptor signaling in CD4-positive NKT cells. Together with MAP4K1, it enhances CD3-triggered activation of T-cells and subsequent IL2 production. May be involved in tumor necrosis factor induced cell death by promoting reactive oxidative species generation, and MLKL oligomerization, ultimately leading to necrosis. Involved in phosphorylation of LAT. May be involved in high affinity immunoglobulin epsilon receptor signaling in mast cells. The chain is Cytokine-dependent hematopoietic cell linker (CLNK) from Homo sapiens (Human).